Reading from the N-terminus, the 299-residue chain is Cold shock protein 1 (299 aa).

A2 carries the N-acetylalanine modification. Residues 12–76 enclose the CSD domain; the sequence is TGKVNWFNAS…GKTKAVNVTA (65 aa). Residues 76–97 are disordered; sequence APGGGSLKKENNSRGNGARRGG. 7 CCHC-type zinc fingers span residues 100 to 117, 132 to 149, 164 to 181, 198 to 215, 230 to 247, 253 to 270, and 280 to 297; these read SGCYNCGELGHISKDCGI, EGCYNCGDTGHFARDCTS, DGCYTCGDVGHVARDCTQ, DGCYTCGDVGHFARDCTQ, GTCYSCGGVGHIARDCAT, RGCYQCGGSGHLARDCDQ, and NACYKCGKEGHFARECSS.

It belongs to the cold shock protein (CSP) family. Mostly expressed in shoot apices and siliques, and, to a lower extent, in roots, cotyledons, stems, shoots, leaves, floral buds and flowers.

The protein resides in the nucleus. The protein localises to the cytoplasm. In terms of biological role, chaperone that binds to RNA, single- (ssDNA) and double-stranded (dsDNA) DNA, and unwinds nucleic acid duplex. Exhibits a DNA melting activity. May be involved in cold resistance. Prevents seed germination under dehydration or salt stress conditions. The polypeptide is Cold shock protein 1 (CSP1) (Arabidopsis thaliana (Mouse-ear cress)).